The following is a 760-amino-acid chain: Catalase-peroxidase (760 aa).

A disordered region spans residues 1–22 (MSQGECPVKKVPNVAGSGTRNT). A cross-link (tryptophyl-tyrosyl-methioninium (Trp-Tyr) (with M-268)) is located at residues 93–242 (WHSAGTYRVT…LAAAHMGLIY (150 aa)). H94 functions as the Proton acceptor in the catalytic mechanism. The interval 206–226 (KGEGIMDGDQHKTDKSEPHTS) is disordered. The span at 213–226 (GDQHKTDKSEPHTS) shows a compositional bias: basic and acidic residues. A cross-link (tryptophyl-tyrosyl-methioninium (Tyr-Met) (with W-93)) is located at residues 242–268 (YVNPEGPEGIPDPVAAAHDIRTTFGRM). Position 283 (H283) interacts with heme b.

Belongs to the peroxidase family. Peroxidase/catalase subfamily. In terms of assembly, homodimer or homotetramer. It depends on heme b as a cofactor. Formation of the three residue Trp-Tyr-Met cross-link is important for the catalase, but not the peroxidase activity of the enzyme.

Its subcellular location is the cytoplasm. The catalysed reaction is H2O2 + AH2 = A + 2 H2O. It carries out the reaction 2 H2O2 = O2 + 2 H2O. Its function is as follows. Bifunctional enzyme with both catalase and broad-spectrum peroxidase activity. The chain is Catalase-peroxidase from Pyrenophora tritici-repentis (strain Pt-1C-BFP) (Wheat tan spot fungus).